Consider the following 185-residue polypeptide: Casparian strip membrane protein 5 (185 aa).

Residues 1–25 (MKAEAVESGEASTIIAAPKRGINRG) lie on the Cytoplasmic side of the membrane. Residues 26–46 (ISIADLILRGVAAIGTFASAL) traverse the membrane as a helical segment. Residues 47–75 (TMGTTSETLTIFTQPIMIRAKYNDLPSLT) lie on the Extracellular side of the membrane. The chain crosses the membrane as a helical span at residues 76 to 96 (FFVIANSIVCGYLVLSIPLSI). Residues 97–108 (SHFIRREARITR) lie on the Cytoplasmic side of the membrane. Residues 109-129 (IILVIFDTAMVELLTAGASAA) form a helical membrane-spanning segment. The Extracellular segment spans residues 130–160 (TVVVYLAHKRNANWLAICQQFNNFCERISGS). Residues 161-181 (LIGSFASIIMIMLIIITSAVA) traverse the membrane as a helical segment. Residues 182–185 (LSRH) are Cytoplasmic-facing.

It belongs to the Casparian strip membrane proteins (CASP) family. As to quaternary structure, homodimer and heterodimers.

The protein resides in the cell membrane. Functionally, regulates membrane-cell wall junctions and localized cell wall deposition. Required for establishment of the Casparian strip membrane domain (CSD) and the subsequent formation of Casparian strips, a cell wall modification of the root endodermis that determines an apoplastic barrier between the intraorganismal apoplasm and the extraorganismal apoplasm and prevents lateral diffusion. The polypeptide is Casparian strip membrane protein 5 (Populus trichocarpa (Western balsam poplar)).